A 315-amino-acid chain; its full sequence is Homoserine kinase (315 aa).

97–107 serves as a coordination point for ATP; sequence PPARGLGSSAT.

This sequence belongs to the GHMP kinase family. Homoserine kinase subfamily.

The protein localises to the cytoplasm. The catalysed reaction is L-homoserine + ATP = O-phospho-L-homoserine + ADP + H(+). The protein operates within amino-acid biosynthesis; L-threonine biosynthesis; L-threonine from L-aspartate: step 4/5. In terms of biological role, catalyzes the ATP-dependent phosphorylation of L-homoserine to L-homoserine phosphate. This chain is Homoserine kinase, found in Synechococcus sp. (strain CC9311).